A 918-amino-acid polypeptide reads, in one-letter code: Glutamate receptor 2.5 (918 aa).

The N-terminal stretch at 1–30 is a signal peptide; that stretch reads MSLFHHLVSRFLSLWLLIFLVFLVLSLGKS. Residues 31–586 are Extracellular-facing; sequence QKEALQVKVG…WVFLKPLTKE (556 aa). N-linked (GlcNAc...) asparagine glycans are attached at residues asparagine 46, asparagine 58, asparagine 122, asparagine 336, asparagine 340, and asparagine 546. A helical membrane pass occupies residues 587-607; sequence LWLVTAASFLYIGIMVWIFEY. Residues 608 to 616 are Cytoplasmic-facing; the sequence is QADEEFREQ. A helical transmembrane segment spans residues 617–637; it reads MIIDKISSVFYFSFSTLFFAH. The Cytoplasmic segment spans residues 638-647; the sequence is RRPSESFFTR. A helical transmembrane segment spans residues 648–668; it reads VLVVVWCFVLLILTQSYTATL. Residues 669-828 lie on the Extracellular side of the membrane; it reads TSMLTVQELR…DSPIQLDHHS (160 aa). N-linked (GlcNAc...) asparagine glycosylation occurs at asparagine 791. The helical transmembrane segment at 829–849 threads the bilayer; it reads FEALFLIVFVVSVILLLLMLA. The Cytoplasmic portion of the chain corresponds to 850–918; the sequence is SRGYQERQHN…VAPLSRLKSA (69 aa). Positions 857–881 are disordered; the sequence is QHNASPNLPNDQANAAQEEVNEEGN. Residues 866–881 are compositionally biased toward low complexity; sequence NDQANAAQEEVNEEGN.

Belongs to the glutamate-gated ion channel (TC 1.A.10.1) family. In terms of assembly, may form heteromers. Expressed predominantly in roots.

The protein localises to the membrane. In terms of biological role, glutamate-gated receptor that probably acts as a non-selective cation channel. May be involved in light-signal transduction and calcium homeostasis via the regulation of calcium influx into cells. The sequence is that of Glutamate receptor 2.5 (GLR2.5) from Arabidopsis thaliana (Mouse-ear cress).